The sequence spans 820 residues: MRYDPNLIEKKWQQFWKEHRSFQANEDEDKVKYYVLDMFPYPSGAGLHVGHLIGYTATDIVARYKRARGFSVLHPMGWDSFGLPAEQYAIRTGTHPKVTTQKNIANFKKQLSAMGFSYDEGREFATSDPDYYHWTQKLFLFLYDQGLAYMADMAVNYCPELGTVLSNEEVENGFSIEGGYPVERKMLRQWILKITAYADKLLEGLDALDWPENVKQLQKNWIGKSEGALVTFHLTQEGSLEAFTTRLDTLLGVSFLVIAPEHPDLDSIVSEEQRDEVTAYVQESLRKSERDRISSVKTKTGVFTGNYAKHPITGNLLPVWISDYVVLGYGTGVVMGVPAHDERDREFAEMFSLPIHEVIDDNGVCIHSNYNDFCLNGLSGQEAKDYVINYLEMRSLGRAKTMYRLRDWLFSRQRYWGEPIPIIHFEDGTHRPLEDDELPLLPPNIDDYRPEGFGQGPLAKAQDWVHIYDEKTGRPGCRETYTMPQWAGSCWYYLRFCDAHNSQLPWSKEKESYWMPVDLYIGGAEHAVLHLLYSRFWHRVFYDAGLVSTPEPFKKLINQGLVLASSYRIPGKGYVSIEDVREENGTWISTCGEIVEVRQEKMSKSKLNGVDPQVLIEEYGADALRMYAMFSGPLDKNKTWSNEGVGGCRRFLNRFYDLVTSSEVQDIEDRDGLVLAHKLVFRITEHIEKMSLNTIPSSFMEFLNDFSKLPVYSKRALSMAVRVLEPIAPHISEELWVILGNPPGIDQAAWPQIDESYLVAQTVTFVVQVNGKLRGRLEVAKEAPKEEVLSLSRSVVAKYLENAQIRKEIYVPNKLVNFVL.

The 'HIGH' region motif lies at 40-51; the sequence is PYPSGAGLHVGH. A 'KMSKS' region motif is present at residues 601-605; it reads KMSKS. An ATP-binding site is contributed by K604.

Belongs to the class-I aminoacyl-tRNA synthetase family.

It is found in the cytoplasm. It catalyses the reaction tRNA(Leu) + L-leucine + ATP = L-leucyl-tRNA(Leu) + AMP + diphosphate. The sequence is that of Leucine--tRNA ligase from Chlamydia pneumoniae (Chlamydophila pneumoniae).